Consider the following 179-residue polypeptide: Large ribosomal subunit protein uL5 (179 aa).

Belongs to the universal ribosomal protein uL5 family. In terms of assembly, part of the 50S ribosomal subunit; contacts the 5S rRNA and probably tRNA. Forms a bridge to the 30S subunit in the 70S ribosome.

In terms of biological role, this is one of the proteins that bind and probably mediate the attachment of the 5S RNA into the large ribosomal subunit, where it forms part of the central protuberance. In the 70S ribosome it contacts protein S13 of the 30S subunit (bridge B1b), connecting the 2 subunits; this bridge is implicated in subunit movement. May contact the P site tRNA; the 5S rRNA and some of its associated proteins might help stabilize positioning of ribosome-bound tRNAs. The chain is Large ribosomal subunit protein uL5 from Pyrobaculum aerophilum (strain ATCC 51768 / DSM 7523 / JCM 9630 / CIP 104966 / NBRC 100827 / IM2).